Reading from the N-terminus, the 438-residue chain is GDP-mannose 6-dehydrogenase (438 aa).

The NAD(+) site is built by Tyr10, Val11, Asp30, Lys35, Thr86, and Thr124. GDP-alpha-D-mannuronate-binding residues include Glu161, Lys210, Asn214, His217, Asn225, Tyr256, Tyr257, Arg259, Phe262, and Gly265. Cys268 is a catalytic residue. Lys271 is an NAD(+) binding site. Lys324 is a binding site for GDP-alpha-D-mannuronate. Position 331 (Arg331) interacts with NAD(+).

Belongs to the UDP-glucose/GDP-mannose dehydrogenase family.

The catalysed reaction is GDP-alpha-D-mannose + 2 NAD(+) + H2O = GDP-alpha-D-mannuronate + 2 NADH + 3 H(+). It functions in the pathway glycan biosynthesis; alginate biosynthesis. Its function is as follows. Catalyzes the oxidation of guanosine diphospho-D-mannose (GDP-D-mannose) to GDP-D-mannuronic acid, a precursor for alginate polymerization. The alginate layer causes a mucoid phenotype and provides a protective barrier against host immune defenses and antibiotics. In Pseudomonas syringae pv. tomato (strain ATCC BAA-871 / DC3000), this protein is GDP-mannose 6-dehydrogenase (algD).